Here is a 191-residue protein sequence, read N- to C-terminus: UPF0149 protein plu3602 (191 aa).

The protein belongs to the UPF0149 family.

This is UPF0149 protein plu3602 from Photorhabdus laumondii subsp. laumondii (strain DSM 15139 / CIP 105565 / TT01) (Photorhabdus luminescens subsp. laumondii).